Here is a 370-residue protein sequence, read N- to C-terminus: MSKIVVALSGGVDSSVTAFILKYQQNHEVIAVFMRNWDSFANNDILGNEDINQDICPQEKDWEDAKKIASQLNIPIYRVDFVKEYYDEVFTYLIEEYRQGRTPNPDIFCNKYIKFGKFIEYVEKNFNPDFIATGHYAKVENSLLYRAKDRNKDQSYFLSQLSSDQLKKIIFPLKDLTKDVIRKIAAENNLVTAQKKDSTGICFIGERNFDKFLQNYIPNMPGNIVDIETNEVVGQHVGVMYYTLGQRKINLSGMKYPYYVAGHDLKNKILYVASIHSKNYLKSDKLEAIEFNLINKNFNKKNLTAKFRYRQEDIKIEILNIDKNKIEISYPDEFEAVTPGQHVVIYDGESCVGGGIINKTYYKGNLNQFH.

Residues 7–14 (ALSGGVDS) and Met34 each bind ATP. The interaction with target base in tRNA stretch occupies residues 104–106 (NPD). Catalysis depends on Cys109, which acts as the Nucleophile. Cysteines 109 and 202 form a disulfide. Gly134 is a binding site for ATP. Residues 152 to 154 (KDQ) are interaction with tRNA. Residue Cys202 is the Cysteine persulfide intermediate of the active site. Positions 308–309 (RY) are interaction with tRNA.

Belongs to the MnmA/TRMU family.

Its subcellular location is the cytoplasm. It catalyses the reaction S-sulfanyl-L-cysteinyl-[protein] + uridine(34) in tRNA + AH2 + ATP = 2-thiouridine(34) in tRNA + L-cysteinyl-[protein] + A + AMP + diphosphate + H(+). Catalyzes the 2-thiolation of uridine at the wobble position (U34) of tRNA, leading to the formation of s(2)U34. The chain is tRNA-specific 2-thiouridylase MnmA from Mycoplasma mobile (strain ATCC 43663 / 163K / NCTC 11711) (Mesomycoplasma mobile).